A 512-amino-acid chain; its full sequence is NAD(P)H-quinone oxidoreductase chain 4, chloroplastic (512 aa).

14 consecutive transmembrane segments (helical) span residues leucine 4–isoleucine 24, tryptophan 34–histidine 54, methionine 87–valine 107, alanine 111–serine 131, leucine 134–valine 154, phenylalanine 167–phenylalanine 187, isoleucine 210–histidine 230, histidine 241–isoleucine 261, leucine 273–threonine 293, methionine 312–leucine 332, glutamine 333–aspartate 353, threonine 373–alanine 395, isoleucine 416–leucine 436, and isoleucine 462–alanine 482.

Belongs to the complex I subunit 4 family.

It localises to the plastid. The protein resides in the chloroplast thylakoid membrane. It catalyses the reaction a plastoquinone + NADH + (n+1) H(+)(in) = a plastoquinol + NAD(+) + n H(+)(out). It carries out the reaction a plastoquinone + NADPH + (n+1) H(+)(in) = a plastoquinol + NADP(+) + n H(+)(out). The protein is NAD(P)H-quinone oxidoreductase chain 4, chloroplastic of Chlorokybus atmophyticus (Soil alga).